Reading from the N-terminus, the 592-residue chain is MALEPIDYTTHSREIDAEYLKIVRGSDPDTTWLIISPNAKKEYEPESTGSSFHDFLQLFDETKVQYGLARVSPPGSDVEKIIIIGWCPDSAPLKTRASFAANFAAVANNLFKGYHVQVTARDEDDLDENELLMKISNAAGARYSIQTSSKQQGKASTPPVKKSFTPSKSPAPVSKKEPVKTPSPAPAAKISSRVNDNNDDDDWNEPELKERDFDQAPLKPNQSSYKPIGKIDLQKVIAEEKAKEDPRLVQKPTAAGSKIDPSSDIANLKNESKLKRDSEFNSFLGTTKPPSMTESSLKNDDDKVIKGFRNEKSPAQLWAERKAKQNSGNAETKAEAPKPEVPEDEPEGEPDVKDLKSKFEGLAASEKEEEEMENKFAPPPKKSEPTIISPKPFSKPQEPVKAEEAEQPKTDYKKIGNPLPGMHIEADNEEEPEENDDDWDDDEDEAAQPPLPSRNVASGAPVQKEEPEQEEIAPSLPSRNSIPAPKQEEAPEQAPEEEIEEEAEEAAPQLPSRSSAAPPPPPRRATPEKKPKENPWATAEYDYDAAEDNELTFVENDKIINIEFVDDDWWLGELEKDGSKGLFPSNYVSLGN.

At alanine 2 the chain carries N-acetylalanine. Residues 7 to 136 (DYTTHSREID…DENELLMKIS (130 aa)) form the ADF-H domain. The span at 144-155 (SIQTSSKQQGKA) shows a compositional bias: polar residues. The interval 144 to 541 (SIQTSSKQQG…KENPWATAEY (398 aa)) is disordered. At threonine 165 the chain carries Phosphothreonine. 2 positions are modified to phosphoserine: serine 167 and serine 169. Phosphothreonine is present on threonine 181. Serine 183 bears the Phosphoserine mark. Repeat unit 1 spans residues 200–209 (DDDWNEPELK). The segment at 200-575 (DDDWNEPELK…DDDWWLGELE (376 aa)) is 3 X 10 AA approximate repeats (acidic). Composition is skewed to basic and acidic residues over residues 237–248 (IAEEKAKEDPRL) and 270–279 (NESKLKRDSE). A compositionally biased stretch (polar residues) spans 280–296 (FNSFLGTTKPPSMTESS). Positions 297–312 (LKNDDDKVIKGFRNEK) are enriched in basic and acidic residues. The residue at position 313 (serine 313) is a Phosphoserine. Basic and acidic residues-rich tracts occupy residues 332 to 341 (TKAEAPKPEV) and 350 to 359 (PDVKDLKSKF). Serine 365 and serine 389 each carry phosphoserine. Over residues 398–414 (EPVKAEEAEQPKTDYKK) the composition is skewed to basic and acidic residues. The span at 427–446 (DNEEEPEENDDDWDDDEDEA) shows a compositional bias: acidic residues. Repeat unit 2 spans residues 436–445 (DDDWDDDEDE). At serine 458 the chain carries Phosphoserine. A Glycyl lysine isopeptide (Lys-Gly) (interchain with G-Cter in ubiquitin) cross-link involves residue lysine 464. Residue serine 481 is modified to Phosphoserine. Residues 490–505 (APEQAPEEEIEEEAEE) show a composition bias toward acidic residues. Residues 506–516 (AAPQLPSRSSA) are compositionally biased toward low complexity. The SH3 domain maps to 532–592 (KENPWATAEY…FPSNYVSLGN (61 aa)). Residues 566 to 575 (DDDWWLGELE) form repeat 3.

The protein belongs to the ABP1 family. In terms of assembly, binds F-actin, but not G-actin. Interacts with the ARP2/3 complex. Interacts with APP1, ARK1, PRK1, SCP1, SRV2 and YIR003W via its SH3 domain. Interacts with the SH3 domain of RVS167 and with SLA1. The actin depolymerizing factor homology (ADF) domain mediates actin filament binding.

It localises to the cytoplasm. The protein localises to the cytoskeleton. It is found in the actin patch. In terms of biological role, regulates ARP2/3 complex-mediated actin assembly. Recruits ARP2/3 complex to sides of preexisting actin filaments, which may promote nucleation or stabilization of filament branches. Binds to actin filaments, but not actin monomers. Actin binding is required for ARP2/3 complex activation. May also have a role in linking the actin cytoskeleton to endocytosis. recruits components of the endocytotic machinery to cortical actin patches, known sites of endocytosis. The protein is Actin-binding protein (ABP1) of Saccharomyces cerevisiae (strain ATCC 204508 / S288c) (Baker's yeast).